Here is a 371-residue protein sequence, read N- to C-terminus: 3-isopropylmalate dehydrogenase B (371 aa).

79–93 serves as a coordination point for NAD(+); the sequence is GSKVDHIRRGLDGPE. Arg-100, Arg-110, Arg-142, and Asp-229 together coordinate substrate. The Mg(2+) site is built by Asp-229, Asp-254, and Asp-258. 296–308 is an NAD(+) binding site; that stretch reads GSAPTIAGKNIAN.

This sequence belongs to the isocitrate and isopropylmalate dehydrogenases family. In terms of assembly, homodimer. Mg(2+) serves as cofactor. The cofactor is Mn(2+).

It localises to the cytoplasm. It carries out the reaction (2R,3S)-3-isopropylmalate + NAD(+) = 4-methyl-2-oxopentanoate + CO2 + NADH. It functions in the pathway amino-acid biosynthesis; L-leucine biosynthesis; L-leucine from 3-methyl-2-oxobutanoate: step 3/4. Functionally, catalyzes the oxidation of 3-carboxy-2-hydroxy-4-methylpentanoate (3-isopropylmalate) to 3-carboxy-4-methyl-2-oxopentanoate. The product decarboxylates to 4-methyl-2 oxopentanoate. The protein is 3-isopropylmalate dehydrogenase B (leu2B) of Aspergillus niger.